The following is a 134-amino-acid chain: Large ribosomal subunit protein bL17 (134 aa).

This sequence belongs to the bacterial ribosomal protein bL17 family. In terms of assembly, part of the 50S ribosomal subunit. Contacts protein L32.

The chain is Large ribosomal subunit protein bL17 from Thioalkalivibrio sulfidiphilus (strain HL-EbGR7).